We begin with the raw amino-acid sequence, 337 residues long: tRNA N6-adenosine threonylcarbamoyltransferase (337 aa).

Fe cation contacts are provided by His-111 and His-115. Residues Leu-134 to Gly-138, Asp-167, Gly-180, and Asn-272 each bind substrate. Asp-300 contacts Fe cation.

It belongs to the KAE1 / TsaD family. The cofactor is Fe(2+).

The protein localises to the cytoplasm. The enzyme catalyses L-threonylcarbamoyladenylate + adenosine(37) in tRNA = N(6)-L-threonylcarbamoyladenosine(37) in tRNA + AMP + H(+). Its function is as follows. Required for the formation of a threonylcarbamoyl group on adenosine at position 37 (t(6)A37) in tRNAs that read codons beginning with adenine. Is involved in the transfer of the threonylcarbamoyl moiety of threonylcarbamoyl-AMP (TC-AMP) to the N6 group of A37, together with TsaE and TsaB. TsaD likely plays a direct catalytic role in this reaction. This is tRNA N6-adenosine threonylcarbamoyltransferase from Salmonella agona (strain SL483).